The following is a 384-amino-acid chain: Histidinol-phosphate aminotransferase 1 (384 aa).

K233 carries the post-translational modification N6-(pyridoxal phosphate)lysine.

This sequence belongs to the class-II pyridoxal-phosphate-dependent aminotransferase family. Histidinol-phosphate aminotransferase subfamily. Homodimer. The cofactor is pyridoxal 5'-phosphate.

It catalyses the reaction L-histidinol phosphate + 2-oxoglutarate = 3-(imidazol-4-yl)-2-oxopropyl phosphate + L-glutamate. The protein operates within amino-acid biosynthesis; L-histidine biosynthesis; L-histidine from 5-phospho-alpha-D-ribose 1-diphosphate: step 7/9. This Thiobacillus denitrificans (strain ATCC 25259 / T1) protein is Histidinol-phosphate aminotransferase 1.